We begin with the raw amino-acid sequence, 385 residues long: MNQEDNTGGGGIFGLFKWTKDALFGTDISPSMKYKDQEERRDRSRYAQDDTNFSMKFGNDSNRRSTNLSRSNSWSGLDSTLHRKYELLPEYNENGFNSIVNGDHHSKERIRSLRSPAPIVPREPLRNEPTDTFGHRLHTKRRTINELSNSQIPFIPPQEDDPLLSKLFNKDGVNEVRRSPYKLSVKDIPGKFPSPLTKRDEIDNYYVRDEDACHKNREYKKAYFDLFAQMDLNSRDLEDLCEDVREQREQFHRNEQTYKQAYEEMRAELVNELKKSKTLFENYYSLGQKYKSLKKVLDQTISHEAELATSRERLYQEEDLKNFEIQTLKQRLSDLELKYTNLQIEKDMQRDNYESEIHDLLLQLSLRNNERKDTSAGSNIFSTGQ.

S29 is subject to Phosphoserine. Basic and acidic residues predominate over residues 34–48 (YKDQEERRDRSRYAQ). The disordered stretch occupies residues 34-76 (YKDQEERRDRSRYAQDDTNFSMKFGNDSNRRSTNLSRSNSWSG). Low complexity predominate over residues 64 to 75 (RSTNLSRSNSWS). S73 and S115 each carry phosphoserine. Positions 229 to 355 (QMDLNSRDLE…KDMQRDNYES (127 aa)) form a coiled coil.

It belongs to the BBP1 family. Homodimer. Interacts with KAR1, MPS2 and SPC29.

Its subcellular location is the cytoplasm. The protein localises to the cytoskeleton. It localises to the microtubule organizing center. The protein resides in the spindle pole body. Component of the spindle pole body (SPB) required for insertion of the nascent SPB into the nuclear envelope and for the proper execution of spindle pole body (SPB) duplication. Connects the central plaque of the SPB with the half-bridge. Required for proper localization of CDC5 at the SPB and for proper M-phase progression. The protein is Spindle pole component BBP1 (BBP1) of Saccharomyces cerevisiae (strain ATCC 204508 / S288c) (Baker's yeast).